The following is an 831-amino-acid chain: Protein ADP-ribosyltransferase PARP3 (831 aa).

A disordered region spans residues 1–69 (MVHETRSRTL…KKLKAEESDL (69 aa)). Composition is skewed to basic and acidic residues over residues 15–32 (EEGKAAPKKQKTESKEQE) and 43–66 (KTADNEEHDGEQEPSKNKKLKAEE). Positions 49 to 199 (EHDGEQEPSK…NKYPKRNLDD (151 aa)) constitute a PADR1 zinc-binding domain. The zinc ribbon stretch occupies residues 124–168 (GPLDKCPVCGGQLECKGLKYNCTGTHSEWACCSFSTNNPSRRGGP). The Zn(2+) site is built by cysteine 129, cysteine 132, cysteine 145, and cysteine 155. The BRCT domain maps to 200-290 (EGIFSGMMIA…EKQPLAAYDI (91 aa)). The WGR domain maps to 338-439 (GGHIYEKDGI…KKFKKKCMKM (102 aa)). The PARP alpha-helical domain occupies 466–585 (HCKLDPSVTF…DINVASRLIG (120 aa)). The PARP catalytic domain maps to 594-827 (DPLSQCYKKL…VKYEEQNMEV (234 aa)).

The protein belongs to the ARTD/PARP family.

The protein localises to the nucleus. The catalysed reaction is L-aspartyl-[protein] + NAD(+) = 4-O-(ADP-D-ribosyl)-L-aspartyl-[protein] + nicotinamide. It carries out the reaction L-glutamyl-[protein] + NAD(+) = 5-O-(ADP-D-ribosyl)-L-glutamyl-[protein] + nicotinamide. Functionally, involved in the base excision repair (BER) pathway, by catalyzing the poly(ADP-ribosyl)ation of a limited number of acceptor proteins involved in chromatin architecture and in DNA metabolism. This modification follows DNA damages and appears as an obligatory step in a detection/signaling pathway leading to the reparation of DNA strand breaks. The protein is Protein ADP-ribosyltransferase PARP3 (PARP3) of Oryza sativa subsp. japonica (Rice).